The chain runs to 144 residues: Transcriptional regulator MraZ (144 aa).

SpoVT-AbrB domains lie at 4 to 47 (EYKN…TADK) and 77 to 120 (AQEI…DLKQ).

The protein belongs to the MraZ family. In terms of assembly, forms oligomers.

Its subcellular location is the cytoplasm. The protein localises to the nucleoid. In Treponema denticola (strain ATCC 35405 / DSM 14222 / CIP 103919 / JCM 8153 / KCTC 15104), this protein is Transcriptional regulator MraZ.